A 250-amino-acid polypeptide reads, in one-letter code: 7-cyano-7-deazaguanine synthase (250 aa).

ATP is bound at residue 28 to 38 (LSGGLDSATCV). The Zn(2+) site is built by C213, C226, C229, and C232.

The protein belongs to the QueC family. Requires Zn(2+) as cofactor.

The catalysed reaction is 7-carboxy-7-deazaguanine + NH4(+) + ATP = 7-cyano-7-deazaguanine + ADP + phosphate + H2O + H(+). Its pathway is purine metabolism; 7-cyano-7-deazaguanine biosynthesis. Its function is as follows. Catalyzes the ATP-dependent conversion of 7-carboxy-7-deazaguanine (CDG) to 7-cyano-7-deazaguanine (preQ(0)). The sequence is that of 7-cyano-7-deazaguanine synthase from Rhodopirellula baltica (strain DSM 10527 / NCIMB 13988 / SH1).